The sequence spans 263 residues: Endolytic peptidoglycan transglycosylase RlpA (263 aa).

A signal peptide spans 1-16 (MNRIYLYLLIVLILAG). The N-palmitoyl cysteine moiety is linked to residue Cys17. Cys17 is lipidated: S-diacylglycerol cysteine. The SPOR domain occupies 182-257 (KNNALEYVIQ…AGYDSAFIKT (76 aa)).

Belongs to the RlpA family.

It localises to the cell membrane. Functionally, lytic transglycosylase with a strong preference for naked glycan strands that lack stem peptides. The chain is Endolytic peptidoglycan transglycosylase RlpA from Vibrio cholerae serotype O1 (strain ATCC 39315 / El Tor Inaba N16961).